The primary structure comprises 906 residues: Protein translocase subunit SecA (906 aa).

Residues glutamine 89, 107-111 (GEGKT), and aspartate 502 contribute to the ATP site. Positions 829–898 (EAPPEPELPP…ACPCGSGKKY (70 aa)) are disordered. Residues 858–877 (WSDHQHDERNVPAAERDPAD) show a composition bias toward basic and acidic residues. 4 residues coordinate Zn(2+): cysteine 890, cysteine 892, cysteine 901, and histidine 902.

This sequence belongs to the SecA family. In terms of assembly, monomer and homodimer. Part of the essential Sec protein translocation apparatus which comprises SecA, SecYEG and auxiliary proteins SecDF-YajC and YidC. It depends on Zn(2+) as a cofactor.

The protein localises to the cell inner membrane. Its subcellular location is the cytoplasm. The enzyme catalyses ATP + H2O + cellular proteinSide 1 = ADP + phosphate + cellular proteinSide 2.. Functionally, part of the Sec protein translocase complex. Interacts with the SecYEG preprotein conducting channel. Has a central role in coupling the hydrolysis of ATP to the transfer of proteins into and across the cell membrane, serving both as a receptor for the preprotein-SecB complex and as an ATP-driven molecular motor driving the stepwise translocation of polypeptide chains across the membrane. The protein is Protein translocase subunit SecA of Brucella anthropi (strain ATCC 49188 / DSM 6882 / CCUG 24695 / JCM 21032 / LMG 3331 / NBRC 15819 / NCTC 12168 / Alc 37) (Ochrobactrum anthropi).